The sequence spans 135 residues: Ribonuclease VapC26 (135 aa).

A PINc domain is found at methionine 1–arginine 118. Mg(2+) is bound by residues aspartate 4 and aspartate 97.

The protein belongs to the PINc/VapC protein family. Mg(2+) is required as a cofactor.

Toxic component of a type II toxin-antitoxin (TA) system. An RNase. Upon expression in M.smegmatis inhibits colony formation. Its toxic effect is neutralized by coexpression with cognate antitoxin VapB26. The protein is Ribonuclease VapC26 of Mycobacterium tuberculosis (strain ATCC 25618 / H37Rv).